The primary structure comprises 55 residues: ATP synthase protein 8 (55 aa).

The helical transmembrane segment at 7–24 (NPWFFIMIISWLTYSMII) threads the bilayer. A disordered region spans residues 34 to 55 (TNPPARKEPTTNTTTPWNWPWT). The span at 43–55 (TTNTTTPWNWPWT) shows a compositional bias: low complexity.

It belongs to the ATPase protein 8 family. F-type ATPases have 2 components, CF(1) - the catalytic core - and CF(0) - the membrane proton channel.

The protein localises to the mitochondrion membrane. Its function is as follows. Mitochondrial membrane ATP synthase (F(1)F(0) ATP synthase or Complex V) produces ATP from ADP in the presence of a proton gradient across the membrane which is generated by electron transport complexes of the respiratory chain. F-type ATPases consist of two structural domains, F(1) - containing the extramembraneous catalytic core and F(0) - containing the membrane proton channel, linked together by a central stalk and a peripheral stalk. During catalysis, ATP synthesis in the catalytic domain of F(1) is coupled via a rotary mechanism of the central stalk subunits to proton translocation. Part of the complex F(0) domain. Minor subunit located with subunit a in the membrane. The chain is ATP synthase protein 8 (MT-ATP8) from Vireo altiloquus (Black-whiskered vireo).